We begin with the raw amino-acid sequence, 518 residues long: Membrane-bound lytic murein transglycosylase F (518 aa).

Residues 1-21 (MKKLKINYLFIGILALLLAVA) form the signal peptide. Residues 22–269 (LWPSIPWFGK…RIEEKYLGHG (248 aa)) form a non-LT domain region. The LT domain stretch occupies residues 270–518 (DDFDYVDTRT…SRKGSEEKQN (249 aa)). The active site involves Glu-314.

The protein in the N-terminal section; belongs to the bacterial solute-binding protein 3 family. It in the C-terminal section; belongs to the transglycosylase Slt family.

The protein resides in the cell outer membrane. It carries out the reaction Exolytic cleavage of the (1-&gt;4)-beta-glycosidic linkage between N-acetylmuramic acid (MurNAc) and N-acetylglucosamine (GlcNAc) residues in peptidoglycan, from either the reducing or the non-reducing ends of the peptidoglycan chains, with concomitant formation of a 1,6-anhydrobond in the MurNAc residue.. Its function is as follows. Murein-degrading enzyme that degrades murein glycan strands and insoluble, high-molecular weight murein sacculi, with the concomitant formation of a 1,6-anhydromuramoyl product. Lytic transglycosylases (LTs) play an integral role in the metabolism of the peptidoglycan (PG) sacculus. Their lytic action creates space within the PG sacculus to allow for its expansion as well as for the insertion of various structures such as secretion systems and flagella. This Escherichia coli O6:H1 (strain CFT073 / ATCC 700928 / UPEC) protein is Membrane-bound lytic murein transglycosylase F.